The primary structure comprises 292 residues: Phosphoribulokinase 2 (292 aa).

Position 12-20 (12-20 (GSSGAGTST)) interacts with ATP.

This sequence belongs to the phosphoribulokinase family.

It carries out the reaction D-ribulose 5-phosphate + ATP = D-ribulose 1,5-bisphosphate + ADP + H(+). The protein operates within carbohydrate biosynthesis; Calvin cycle. In Cereibacter sphaeroides (Rhodobacter sphaeroides), this protein is Phosphoribulokinase 2 (prkB).